The primary structure comprises 644 residues: Exoribonuclease 2 (644 aa).

Residues arginine 189–lysine 516 form the RNB domain. Positions aspartate 561 to valine 643 constitute an S1 motif domain.

It belongs to the RNR ribonuclease family. RNase II subfamily.

The protein localises to the cytoplasm. The enzyme catalyses Exonucleolytic cleavage in the 3'- to 5'-direction to yield nucleoside 5'-phosphates.. Functionally, involved in mRNA degradation. Hydrolyzes single-stranded polyribonucleotides processively in the 3' to 5' direction. In Escherichia coli (strain UTI89 / UPEC), this protein is Exoribonuclease 2.